Consider the following 380-residue polypeptide: Flap endonuclease 1 (380 aa).

Positions 1–104 are N-domain; sequence MGIKGLSQLI…GELTKRAEKR (104 aa). Asp-34 is a binding site for Mg(2+). 2 residues coordinate DNA: Arg-47 and Arg-70. Positions 86, 158, 160, 179, and 181 each coordinate Mg(2+). The interval 122-253 is I-domain; sequence DIDKFNRRLV…KKAVELINKH (132 aa). Position 158 (Glu-158) interacts with DNA. Residues Gly-231 and Asp-233 each coordinate DNA. Asp-233 serves as a coordination point for Mg(2+). Residues 336–344 are interaction with PCNA; sequence TQGRLDSFF. Residues 342–380 form a disordered region; it reads SFFKVLPSTPNPKRKIEDKKTPASKKAKTTGGKPGRKPK. The span at 363-380 shows a compositional bias: basic residues; sequence PASKKAKTTGGKPGRKPK.

The protein belongs to the XPG/RAD2 endonuclease family. FEN1 subfamily. In terms of assembly, interacts with PCNA. Three molecules of FEN1 bind to one PCNA trimer with each molecule binding to one PCNA monomer. PCNA stimulates the nuclease activity without altering cleavage specificity. Mg(2+) is required as a cofactor. Phosphorylated. Phosphorylation upon DNA damage induces relocalization to the nuclear plasma.

It is found in the nucleus. Its subcellular location is the nucleolus. It localises to the nucleoplasm. The protein localises to the mitochondrion. Its function is as follows. Structure-specific nuclease with 5'-flap endonuclease and 5'-3' exonuclease activities involved in DNA replication and repair. During DNA replication, cleaves the 5'-overhanging flap structure that is generated by displacement synthesis when DNA polymerase encounters the 5'-end of a downstream Okazaki fragment. It enters the flap from the 5'-end and then tracks to cleave the flap base, leaving a nick for ligation. Also involved in the long patch base excision repair (LP-BER) pathway, by cleaving within the apurinic/apyrimidinic (AP) site-terminated flap. Acts as a genome stabilization factor that prevents flaps from equilibrating into structures that lead to duplications and deletions. Also possesses 5'-3' exonuclease activity on nicked or gapped double-stranded DNA, and exhibits RNase H activity. Also involved in replication and repair of rDNA and in repairing mitochondrial DNA. This is Flap endonuclease 1 from Aedes aegypti (Yellowfever mosquito).